The following is a 191-amino-acid chain: Protein GrpE (191 aa).

The segment covering 1–11 (MTDSSNAHEAE) has biased composition (basic and acidic residues). 2 disordered regions span residues 1-22 (MTDS…DNEI) and 172-191 (KVSK…NNNE).

The protein belongs to the GrpE family. As to quaternary structure, homodimer.

The protein resides in the cytoplasm. Its function is as follows. Participates actively in the response to hyperosmotic and heat shock by preventing the aggregation of stress-denatured proteins, in association with DnaK and GrpE. It is the nucleotide exchange factor for DnaK and may function as a thermosensor. Unfolded proteins bind initially to DnaJ; upon interaction with the DnaJ-bound protein, DnaK hydrolyzes its bound ATP, resulting in the formation of a stable complex. GrpE releases ADP from DnaK; ATP binding to DnaK triggers the release of the substrate protein, thus completing the reaction cycle. Several rounds of ATP-dependent interactions between DnaJ, DnaK and GrpE are required for fully efficient folding. This chain is Protein GrpE, found in Chlamydia abortus (strain DSM 27085 / S26/3) (Chlamydophila abortus).